The following is a 309-amino-acid chain: Solute carrier family 25 member 48 (309 aa).

Solcar repeat units lie at residues valine 3–leucine 86, cysteine 99–tryptophan 209, and proline 218–phenylalanine 305. Helical transmembrane passes span phenylalanine 9–valine 29, glycine 61–serine 81, threonine 105–valine 125, glycine 186–phenylalanine 206, proline 218–alanine 238, and alanine 281–tyrosine 299.

It belongs to the mitochondrial carrier (TC 2.A.29) family.

It localises to the mitochondrion inner membrane. The protein is Solute carrier family 25 member 48 (slc25a48) of Danio rerio (Zebrafish).